The chain runs to 367 residues: Tetraprenyl-beta-curcumene synthase (367 aa).

Belongs to the large terpene synthase family.

It catalyses the reaction all-trans-heptaprenyl diphosphate = (R)-tetraprenyl-beta-curcumene + diphosphate. Its function is as follows. Catalyzes the transformation of a linear C35 prenyl diphosphate chain to form tetraprenyl-beta-curcumene. The sequence is that of Tetraprenyl-beta-curcumene synthase (ytpB) from Bacillus subtilis (strain 168).